Reading from the N-terminus, the 95-residue chain is MSFKPLHDRIAIKPIEHEEKTKGGIIIPDTAKEKPMQGEIVAVGNGVRNKKGEIHPLELKVGDKVLYGKWAGTEIEIKGEKLIVMKESDVFGIIN.

It belongs to the GroES chaperonin family. Heptamer of 7 subunits arranged in a ring. Interacts with the chaperonin GroEL.

It is found in the cytoplasm. Its function is as follows. Together with the chaperonin GroEL, plays an essential role in assisting protein folding. The GroEL-GroES system forms a nano-cage that allows encapsulation of the non-native substrate proteins and provides a physical environment optimized to promote and accelerate protein folding. GroES binds to the apical surface of the GroEL ring, thereby capping the opening of the GroEL channel. The polypeptide is Co-chaperonin GroES (Rickettsia akari (strain Hartford)).